The following is an 874-amino-acid chain: ATP-dependent RNA helicase DDX54 (874 aa).

Residues 1–76 (MAAGRRVGPG…FPTSECVSDV (76 aa)) are disordered. The span at 20 to 30 (WKKKRLRKRRT) shows a compositional bias: basic residues. Threonine 30 is modified (phosphothreonine). Phosphoserine occurs at positions 33, 38, 40, and 74. A compositionally biased stretch (acidic residues) spans 39–50 (DSDDGEFEIQAE). Positions 95-123 (GGFQSMGLSYPVFKGIMKKGYKVPTPIQR) match the Q motif motif. Positions 126-298 (IPVILDGKDV…RAGLTEPVLI (173 aa)) constitute a Helicase ATP-binding domain. 139–146 (ARTGSGKT) contacts ATP. Positions 246–249 (DEAD) match the DEAD box motif. The Helicase C-terminal domain maps to 328 to 472 (YLLQNVVRPQ…ARPCEEPSVA (145 aa)). The span at 581 to 590 (ASSKDPSSQM) shows a compositional bias: polar residues. The interval 581–687 (ASSKDPSSQM…PKDFDSERGL (107 aa)) is disordered. Residues 636 to 645 (TVEGVFTEVV) show a composition bias toward low complexity. Residues 664–685 (ETRQRDQEFYVPYRPKDFDSER) are compositionally biased toward basic and acidic residues. Residues serine 688 and serine 690 each carry the phosphoserine modification. Residues 712 to 874 (AQNMSRGQQQ…SRKGKMRKRM (163 aa)) form a disordered region. Over residues 713 to 722 (QNMSRGQQQL) the composition is skewed to polar residues. Composition is skewed to basic and acidic residues over residues 737-747 (QEDKKKIKTES) and 755-771 (YKRDLYQKWKQKQKIDD). Phosphoserine is present on residues serine 774 and serine 780. Basic and acidic residues predominate over residues 812 to 823 (MRSELKTKEQIL). The span at 864 to 874 (PSRKGKMRKRM) shows a compositional bias: basic residues.

It belongs to the DEAD box helicase family. DDX54/DBP10 subfamily. In terms of assembly, interacts in a hormone-dependent manner with nuclear receptors.

Its subcellular location is the nucleus. It localises to the nucleolus. It carries out the reaction ATP + H2O = ADP + phosphate + H(+). Has RNA-dependent ATPase activity. Represses the transcriptional activity of nuclear receptors. This is ATP-dependent RNA helicase DDX54 (Ddx54) from Mus musculus (Mouse).